Reading from the N-terminus, the 404-residue chain is Type II restriction enzyme EcoRII (404 aa).

The active site involves Tyr308.

In terms of assembly, homodimer. Mg(2+) is required as a cofactor.

The enzyme catalyses Endonucleolytic cleavage of DNA to give specific double-stranded fragments with terminal 5'-phosphates.. Functionally, an E and P subtype restriction enzyme that recognizes the double-stranded sequence 5'-CCWGG-3' and cleaves before C-1. The protein is Type II restriction enzyme EcoRII (ecoRIIR) of Escherichia coli.